The primary structure comprises 165 residues: Cyclic pyranopterin monophosphate synthase (165 aa).

Substrate-binding positions include 78–80 and 116–117; these read LCH and ME. Residue Asp131 is part of the active site.

This sequence belongs to the MoaC family. As to quaternary structure, homohexamer; trimer of dimers.

It catalyses the reaction (8S)-3',8-cyclo-7,8-dihydroguanosine 5'-triphosphate = cyclic pyranopterin phosphate + diphosphate. Its pathway is cofactor biosynthesis; molybdopterin biosynthesis. In terms of biological role, catalyzes the conversion of (8S)-3',8-cyclo-7,8-dihydroguanosine 5'-triphosphate to cyclic pyranopterin monophosphate (cPMP). The sequence is that of Cyclic pyranopterin monophosphate synthase from Sinorhizobium fredii (strain NBRC 101917 / NGR234).